A 794-amino-acid polypeptide reads, in one-letter code: Ent-copalyl diphosphate synthase 2 (794 aa).

A chloroplast-targeting transit peptide spans 1–35 (MSSSSNVTSLPRLTTAGGVFPREMVRVHSSCNILR). Lysine 238 contributes to the substrate binding site. 2 residues coordinate Mg(2+): aspartate 369 and aspartate 371. A DXDD motif motif is present at residues 369–372 (DVDD). A substrate-binding site is contributed by lysine 455.

This sequence belongs to the terpene synthase family. Tpsc subfamily. Requires Mg(2+) as cofactor. Expressed in leaves.

Its subcellular location is the plastid. It localises to the chloroplast. The enzyme catalyses (2E,6E,10E)-geranylgeranyl diphosphate = ent-copalyl diphosphate. It functions in the pathway secondary metabolite biosynthesis; terpenoid biosynthesis. Its function is as follows. Involved in the biosynthesis of ent-kaurene diterpenoids natural products such as oridonin, miltiradiene, eriocalyxin B and nezukol, known to exhibit antitumor, anti-inflammatory and antibacterial activities. Catalyzes the conversion of (2E,6E,10E)-geranylgeranyl diphosphate (GGPP) to ent-copalyl diphosphate (ent-CPP). The chain is Ent-copalyl diphosphate synthase 2 from Isodon eriocalyx (Plectranthus eriocalyx).